We begin with the raw amino-acid sequence, 197 residues long: A-type ATP synthase subunit E 2 (197 aa).

This sequence belongs to the V-ATPase E subunit family. In terms of assembly, has multiple subunits with at least A(3), B(3), C, D, E, F, H, I and proteolipid K(x).

The protein localises to the cell membrane. Functionally, component of the A-type ATP synthase that produces ATP from ADP in the presence of a proton gradient across the membrane. The chain is A-type ATP synthase subunit E 2 from Methanospirillum hungatei JF-1 (strain ATCC 27890 / DSM 864 / NBRC 100397 / JF-1).